A 362-amino-acid polypeptide reads, in one-letter code: MNIKSLLLGSAAALVAASGAQAADAIVAPEPEAVEYVRVCDAYGAGYFYIPGTETCLRVHGYVRYDVKGGDDVYSGTDRNGWDKSARFALRVSTGSETELGTLKTFTELRFNYAANNSGVDGKYGNETSSGTVMEFAYIQLGGLRVGIDESEFHTFTGYLGDVINDDVISAGSYRTGKISYTFTGGNGFSAVIALEQGGDNDGGYTGTTNYRIDGYMPDVVGGLKYAGGWGSIAGVVAYDSVIEEWAAKVRGDVNITDQFSVWLQGAYSSAATPDQNYGQWGGDWAVWGGLKYQATQKAAFNLQAAHDDWGKTAVTANVAYELVPGFTVTPEVSYTKFGGEWKNTVAEDNAWGGIVRFQRSF.

The N-terminal stretch at 1–22 (MNIKSLLLGSAAALVAASGAQA) is a signal peptide.

The protein belongs to the alphaproteobacteria porin family. Homotrimer.

The protein localises to the cell outer membrane. Its function is as follows. Forms passive diffusion pores that allow small molecular weight hydrophilic materials across the outer membrane. The chain is Porin Omp2b (omp2b) from Brucella suis biovar 1 (strain 1330).